Here is a 524-residue protein sequence, read N- to C-terminus: Cytosolic Fe-S cluster assembly factor NAR1 (524 aa).

[4Fe-4S] cluster contacts are provided by cysteine 20, cysteine 52, cysteine 55, cysteine 58, cysteine 158, and cysteine 206. Positions 362–388 are disordered; the sequence is IRKRPTANGNDNSISLSSSINNQDNNN. The span at 369–388 shows a compositional bias: low complexity; the sequence is NGNDNSISLSSSINNQDNNN. [4Fe-4S] cluster-binding residues include cysteine 408 and cysteine 412. Positions 501 to 524 are disordered; it reads SSISETHNGDSKNTIEQPVQFTTW.

Belongs to the NARF family.

Its function is as follows. Component of the cytosolic Fe/S protein assembly machinery. Required for maturation of extramitochondrial Fe/S proteins. May play a role in the transfer of pre-assembled Fe/S clusters to target apoproteins. This is Cytosolic Fe-S cluster assembly factor NAR1 (NAR1) from Vanderwaltozyma polyspora (strain ATCC 22028 / DSM 70294 / BCRC 21397 / CBS 2163 / NBRC 10782 / NRRL Y-8283 / UCD 57-17) (Kluyveromyces polysporus).